The primary structure comprises 188 residues: Holliday junction branch migration complex subunit RuvA (188 aa).

Positions 1 to 64 (MIAGISGRVL…QDGITLYGFS (64 aa)) are domain I. A domain II region spans residues 65–143 (NERKKELFLS…SAGIKDMRIY (79 aa)). Y143 is a region of interest (flexible linker). The domain III stretch occupies residues 143–188 (YHESLEALISLGYPEKQAREAVKHVYREGMKTSELIKEALKFLSQR).

Belongs to the RuvA family. In terms of assembly, homotetramer. Forms an RuvA(8)-RuvB(12)-Holliday junction (HJ) complex. HJ DNA is sandwiched between 2 RuvA tetramers; dsDNA enters through RuvA and exits via RuvB. An RuvB hexamer assembles on each DNA strand where it exits the tetramer. Each RuvB hexamer is contacted by two RuvA subunits (via domain III) on 2 adjacent RuvB subunits; this complex drives branch migration. In the full resolvosome a probable DNA-RuvA(4)-RuvB(12)-RuvC(2) complex forms which resolves the HJ.

Its subcellular location is the cytoplasm. In terms of biological role, the RuvA-RuvB-RuvC complex processes Holliday junction (HJ) DNA during genetic recombination and DNA repair, while the RuvA-RuvB complex plays an important role in the rescue of blocked DNA replication forks via replication fork reversal (RFR). RuvA specifically binds to HJ cruciform DNA, conferring on it an open structure. The RuvB hexamer acts as an ATP-dependent pump, pulling dsDNA into and through the RuvAB complex. HJ branch migration allows RuvC to scan DNA until it finds its consensus sequence, where it cleaves and resolves the cruciform DNA. This is Holliday junction branch migration complex subunit RuvA from Thermotoga petrophila (strain ATCC BAA-488 / DSM 13995 / JCM 10881 / RKU-1).